A 465-amino-acid polypeptide reads, in one-letter code: MMKSRFCPSPTGLMHLGNARTALFNYLFAKSKDGIFLLRIEDTDVERSKETFDLGLQEDLRWLNLEWQEGPGADEGNGPYHQSKRQAIYDDYYQRLEEADQAYPCFCSEEQLRLSRKIQRSAGKPPRYAGTCRSLSAAEIEKKKAEGLQPALRFRVPDDEVVVFADLVRGEQRFQTNDIGDFIIRRANGTSPFMFCNAIDDALMGVSHVLRGEDHLTNTPRQLLILQALELPVPTYAHIALIVGPDGSPLSKRHGSRGIKELRDNGYLPLALTNYLARLGHYYASDELLSLAELAKGFNVESLSKSPAKFNAQQLDYWQKQTVNQLPNDDFWEWAGSELQSQIPTDKADLFLTTVKPNVSFPRDVAYWVNVCFGKTFNLETAQSELLRATGNRYFEEAFEAFKKFGKDLNSVVSHLKEKLNLKGKPLYQPLRIALTGAEHGPELAKLILIMDYETIQNRLQEACQ.

The short motif at Pro-8–Asn-18 is the 'HIGH' region element. Positions Pro-249–Arg-253 match the 'KMSKS' region motif. Position 252 (Lys-252) interacts with ATP.

It belongs to the class-I aminoacyl-tRNA synthetase family. Glutamate--tRNA ligase type 1 subfamily. In terms of assembly, monomer.

It is found in the cytoplasm. The enzyme catalyses tRNA(Glu) + L-glutamate + ATP = L-glutamyl-tRNA(Glu) + AMP + diphosphate. Its function is as follows. Catalyzes the attachment of glutamate to tRNA(Glu) in a two-step reaction: glutamate is first activated by ATP to form Glu-AMP and then transferred to the acceptor end of tRNA(Glu). This chain is Glutamate--tRNA ligase 1, found in Coxiella burnetii (strain CbuG_Q212) (Coxiella burnetii (strain Q212)).